A 512-amino-acid polypeptide reads, in one-letter code: GMP synthase [glutamine-hydrolyzing] (512 aa).

Residues Thr7–Gly197 form the Glutamine amidotransferase type-1 domain. Catalysis depends on Cys84, which acts as the Nucleophile. Catalysis depends on residues His171 and Glu173. In terms of domain architecture, GMPS ATP-PPase spans Trp198–Arg387. Residue Ser225–Ser231 participates in ATP binding.

Homodimer.

It catalyses the reaction XMP + L-glutamine + ATP + H2O = GMP + L-glutamate + AMP + diphosphate + 2 H(+). It functions in the pathway purine metabolism; GMP biosynthesis; GMP from XMP (L-Gln route): step 1/1. Functionally, catalyzes the synthesis of GMP from XMP. The protein is GMP synthase [glutamine-hydrolyzing] of Bacillus cereus (strain B4264).